The following is a 499-amino-acid chain: Bifunctional purine biosynthesis protein PurH (499 aa).

The region spanning 1–144 (MINRALISVY…KNFKDVIVVT (144 aa)) is the MGS-like domain.

This sequence belongs to the PurH family.

It carries out the reaction (6R)-10-formyltetrahydrofolate + 5-amino-1-(5-phospho-beta-D-ribosyl)imidazole-4-carboxamide = 5-formamido-1-(5-phospho-D-ribosyl)imidazole-4-carboxamide + (6S)-5,6,7,8-tetrahydrofolate. It catalyses the reaction IMP + H2O = 5-formamido-1-(5-phospho-D-ribosyl)imidazole-4-carboxamide. It participates in purine metabolism; IMP biosynthesis via de novo pathway; 5-formamido-1-(5-phospho-D-ribosyl)imidazole-4-carboxamide from 5-amino-1-(5-phospho-D-ribosyl)imidazole-4-carboxamide (10-formyl THF route): step 1/1. It functions in the pathway purine metabolism; IMP biosynthesis via de novo pathway; IMP from 5-formamido-1-(5-phospho-D-ribosyl)imidazole-4-carboxamide: step 1/1. The polypeptide is Bifunctional purine biosynthesis protein PurH (Clostridium kluyveri (strain NBRC 12016)).